The primary structure comprises 477 residues: S-triazine hydrolase (477 aa).

2 stretches are compositionally biased toward low complexity: residues 38–73 (SPTT…KSSS) and 120–132 (PLSS…DPTT). Disordered stretches follow at residues 38 to 77 (SPTT…GVVH) and 120 to 143 (PLSS…GSPF).

This sequence belongs to the metallo-dependent hydrolases superfamily. ATZ/TRZ family.

The protein operates within xenobiotic degradation; melamine degradation. Its function is as follows. Hydrolytic deamination of the S-triazine substrate melamine. The protein is S-triazine hydrolase (trzA) of Gordonia rubripertincta (Rhodococcus corallinus).